The following is a 363-amino-acid chain: D-xylulose reductase (363 aa).

C41, H66, and E159 together coordinate Zn(2+). 183-188 (GAGPVG) is an NAD(+) binding site.

The protein belongs to the zinc-containing alcohol dehydrogenase family. The cofactor is Zn(2+).

The catalysed reaction is xylitol + NAD(+) = D-xylulose + NADH + H(+). Its pathway is carbohydrate degradation; L-arabinose degradation via L-arabinitol; D-xylulose 5-phosphate from L-arabinose (fungal route): step 4/5. The chain is D-xylulose reductase (XYL2) from Scheffersomyces stipitis (strain ATCC 58785 / CBS 6054 / NBRC 10063 / NRRL Y-11545) (Yeast).